The chain runs to 326 residues: N-acetyl-gamma-glutamyl-phosphate reductase (326 aa).

The active site involves Cys-155.

Belongs to the NAGSA dehydrogenase family. Type 1 subfamily.

The protein resides in the cytoplasm. The catalysed reaction is N-acetyl-L-glutamate 5-semialdehyde + phosphate + NADP(+) = N-acetyl-L-glutamyl 5-phosphate + NADPH + H(+). The protein operates within amino-acid biosynthesis; L-arginine biosynthesis; N(2)-acetyl-L-ornithine from L-glutamate: step 3/4. Catalyzes the NADPH-dependent reduction of N-acetyl-5-glutamyl phosphate to yield N-acetyl-L-glutamate 5-semialdehyde. This is N-acetyl-gamma-glutamyl-phosphate reductase from Shewanella sp. (strain MR-4).